We begin with the raw amino-acid sequence, 140 residues long: uncharacterized protein (140 aa).

This sequence belongs to the peptidase S24 family.

This is an uncharacterized protein from Haemophilus influenzae (strain ATCC 51907 / DSM 11121 / KW20 / Rd).